A 1222-amino-acid polypeptide reads, in one-letter code: ATP-dependent helicase/nuclease subunit A (1222 aa).

The 457-residue stretch at His27 to Gly483 folds into the UvrD-like helicase ATP-binding domain. Ala48–Asn55 contributes to the ATP binding site. The UvrD-like helicase C-terminal domain maps to Glu512 to Gln798.

It belongs to the helicase family. AddA subfamily. In terms of assembly, heterodimer of AddA and AddB/RexB. It depends on Mg(2+) as a cofactor.

The enzyme catalyses Couples ATP hydrolysis with the unwinding of duplex DNA by translocating in the 3'-5' direction.. It catalyses the reaction ATP + H2O = ADP + phosphate + H(+). Its function is as follows. The heterodimer acts as both an ATP-dependent DNA helicase and an ATP-dependent, dual-direction single-stranded exonuclease. Recognizes the chi site generating a DNA molecule suitable for the initiation of homologous recombination. The AddA nuclease domain is required for chi fragment generation; this subunit has the helicase and 3' -&gt; 5' nuclease activities. This is ATP-dependent helicase/nuclease subunit A from Streptococcus pyogenes serotype M1.